We begin with the raw amino-acid sequence, 1060 residues long: FACT complex subunit SPT16 (1060 aa).

Positions 458–490 (FNDDNETQKENNNNNNKRPGLSQTSNTTALKLE) are disordered. Polar residues predominate over residues 478-490 (LSQTSNTTALKLE). Residues 508-532 (NADDANSEKLRQEIQIKLHEKRLQE) adopt a coiled-coil conformation. Residues 977 to 1060 (QGESDEEEES…AKADRNSGFD (84 aa)) are disordered. Composition is skewed to acidic residues over residues 979 to 990 (ESDEEEESDEES) and 997 to 1044 (EDPQ…EDWD). A compositionally biased stretch (basic and acidic residues) spans 1045 to 1060 (ALERKAAKADRNSGFD).

Belongs to the peptidase M24 family. SPT16 subfamily. In terms of assembly, forms a stable heterodimer with POB3. The SPT16-POB3 dimer weakly associates with multiple molecules of NHP6 to form the FACT complex.

It localises to the nucleus. The protein resides in the chromosome. In terms of biological role, component of the FACT complex, a general chromatin factor that acts to reorganize nucleosomes. The FACT complex is involved in multiple processes that require DNA as a template such as mRNA elongation, DNA replication and DNA repair. During transcription elongation the FACT complex acts as a histone chaperone that both destabilizes and restores nucleosomal structure. It facilitates the passage of RNA polymerase II and transcription by promoting the dissociation of one histone H2A-H2B dimer from the nucleosome, then subsequently promotes the reestablishment of the nucleosome following the passage of RNA polymerase II. In Candida albicans (strain SC5314 / ATCC MYA-2876) (Yeast), this protein is FACT complex subunit SPT16 (CDC68).